A 352-amino-acid polypeptide reads, in one-letter code: Carbohydrate sulfotransferase 11 (352 aa).

Topologically, residues 1–16 (MKQTILDLMRMSRICR) are cytoplasmic. The helical; Signal-anchor for type II membrane protein transmembrane segment at 17–37 (MVLATCLGSFILVIFYFQSMF) threads the bilayer. Over 38-352 (QPVMRRNPFA…YSIPSYLKLQ (315 aa)) the chain is Lumenal. 3'-phosphoadenylyl sulfate contacts are provided by residues 124–130 (PKVACTN) and 186–194 (REPFERLVS). Asn-205, Asn-223, Asn-321, and Asn-342 each carry an N-linked (GlcNAc...) asparagine glycan.

It belongs to the sulfotransferase 2 family.

It localises to the golgi apparatus membrane. It catalyses the reaction chondroitin beta-D-glucuronate + n 3'-phosphoadenylyl sulfate = chondroitin 4'-sulfate + n adenosine 3',5'-bisphosphate + n H(+). Its function is as follows. Catalyzes the transfer of sulfate to position 4 of the N-acetylgalactosamine (GalNAc) residue of chondroitin. The sequence is that of Carbohydrate sulfotransferase 11 (chst11) from Danio rerio (Zebrafish).